Reading from the N-terminus, the 344-residue chain is Axoneme-associated protein mst101(1) (344 aa).

12 repeat units span residues 74–89, 90–105, 106–121, 122–137, 138–153, 154–169, 170–185, 186–201, 202–217, 218–233, 234–249, and 250–265. Positions 74-344 are 17 X 16 AA approximate tandem repeats of K-K-K-C-X-E-X-A-[KQ]-K-X-X-E-X-A-X; it reads KKKCAEAAKK…AAQKKCEPKK (271 aa). Residues 206 to 244 are disordered; that stretch reads KEAAEKKKCEERAKKEKEAAEKKKCEERAKKEKEAAEKK. The 13; approximate repeat unit spans residues 266–281; that stretch reads AQKKKCAELAKKAKEA. The 14; approximate repeat unit spans residues 282–297; it reads AEKKKCAKKAGEKGSK. Over residues 285 to 315 the composition is skewed to basic and acidic residues; sequence KKCAKKAGEKGSKQSGSDKGKKNGKKNDMKN. The segment at 285 to 318 is disordered; the sequence is KKCAKKAGEKGSKQSGSDKGKKNGKKNDMKNKCA. The stretch at 298 to 313 is one 15; approximate repeat; it reads QSGSDKGKKNGKKNDM. Copy 16 of the repeat occupies 314-329; the sequence is KNKCAMLAKKAKEEAL. The stretch at 330 to 344 is one 17; truncated repeat; sequence KKKCAAAQKKCEPKK.

Testis. Located in spermatocytes and spermatid bundles.

The protein resides in the cytoplasm. Functionally, possible structural role in the sperm tail. It is associated with axonemal structures. The protein is Axoneme-associated protein mst101(1) (mst101(1)) of Drosophila hydei (Fruit fly).